The following is a 609-amino-acid chain: UvrABC system protein C (609 aa).

One can recognise a GIY-YIG domain in the interval Ser16–Val94. Residues Leu203–Val238 form the UVR domain.

The protein belongs to the UvrC family. As to quaternary structure, interacts with UvrB in an incision complex.

The protein resides in the cytoplasm. Functionally, the UvrABC repair system catalyzes the recognition and processing of DNA lesions. UvrC both incises the 5' and 3' sides of the lesion. The N-terminal half is responsible for the 3' incision and the C-terminal half is responsible for the 5' incision. In Shewanella sediminis (strain HAW-EB3), this protein is UvrABC system protein C.